The sequence spans 162 residues: Ribosome maturation factor RimP (162 aa).

The protein belongs to the RimP family.

It localises to the cytoplasm. In terms of biological role, required for maturation of 30S ribosomal subunits. This is Ribosome maturation factor RimP from Cupriavidus necator (strain ATCC 17699 / DSM 428 / KCTC 22496 / NCIMB 10442 / H16 / Stanier 337) (Ralstonia eutropha).